Reading from the N-terminus, the 397-residue chain is Acetate kinase (397 aa).

A Mg(2+)-binding site is contributed by Asn-7. Lys-14 provides a ligand contact to ATP. Residue Arg-91 coordinates substrate. Residue Asp-148 is the Proton donor/acceptor of the active site. Residues 208-212 (HIGNG), 283-285 (DMR), and 331-335 (GVGEN) each bind ATP. Glu-384 serves as a coordination point for Mg(2+).

This sequence belongs to the acetokinase family. Homodimer. It depends on Mg(2+) as a cofactor. Requires Mn(2+) as cofactor.

The protein resides in the cytoplasm. It catalyses the reaction acetate + ATP = acetyl phosphate + ADP. Its pathway is metabolic intermediate biosynthesis; acetyl-CoA biosynthesis; acetyl-CoA from acetate: step 1/2. In terms of biological role, catalyzes the formation of acetyl phosphate from acetate and ATP. Can also catalyze the reverse reaction. This chain is Acetate kinase, found in Azobacteroides pseudotrichonymphae genomovar. CFP2.